Consider the following 276-residue polypeptide: Putative translation initiation factor eIF-2B subunit 2-like (276 aa).

Belongs to the eIF-2B alpha/beta/delta subunits family. As to quaternary structure, complex of two different subunits.

Its function is as follows. Catalyzes the exchange of initiation factor 2-bound GDP for GTP. In Pyrococcus horikoshii (strain ATCC 700860 / DSM 12428 / JCM 9974 / NBRC 100139 / OT-3), this protein is Putative translation initiation factor eIF-2B subunit 2-like.